Reading from the N-terminus, the 204-residue chain is Small ribosomal subunit protein uS4 (204 aa).

In terms of domain architecture, S4 RNA-binding spans 92 to 153 (RRLDALVLRS…RSKEKTLFTI (62 aa)).

The protein belongs to the universal ribosomal protein uS4 family. In terms of assembly, part of the 30S ribosomal subunit. Contacts protein S5. The interaction surface between S4 and S5 is involved in control of translational fidelity.

One of the primary rRNA binding proteins, it binds directly to 16S rRNA where it nucleates assembly of the body of the 30S subunit. In terms of biological role, with S5 and S12 plays an important role in translational accuracy. The protein is Small ribosomal subunit protein uS4 of Streptomyces coelicolor (strain ATCC BAA-471 / A3(2) / M145).